A 220-amino-acid chain; its full sequence is Adenylate kinase (220 aa).

10–15 (GAGKGT) provides a ligand contact to ATP. Positions 30–59 (STGDMLRAAVKAGSPLGVEAKGYMDAGKLV) are NMP. AMP is bound by residues Thr31, Arg36, 57 to 59 (KLV), 85 to 88 (GFPR), and Gln92. The segment at 122–159 (GRRTHAASGRTYHVKFNPPKVEGQDDVTGEPLIQRDDD) is LID. ATP contacts are provided by residues Arg123 and 132 to 133 (TY). AMP is bound by residues Arg156 and Arg167. An ATP-binding site is contributed by Gly206.

It belongs to the adenylate kinase family. In terms of assembly, monomer.

Its subcellular location is the cytoplasm. It carries out the reaction AMP + ATP = 2 ADP. Its pathway is purine metabolism; AMP biosynthesis via salvage pathway; AMP from ADP: step 1/1. Functionally, catalyzes the reversible transfer of the terminal phosphate group between ATP and AMP. Plays an important role in cellular energy homeostasis and in adenine nucleotide metabolism. The polypeptide is Adenylate kinase (Burkholderia vietnamiensis (strain G4 / LMG 22486) (Burkholderia cepacia (strain R1808))).